The chain runs to 333 residues: Protein APEM9 (333 aa).

The Cytoplasmic portion of the chain corresponds to 1–90 (MEATDIWGEI…ELRDVFGEVA (90 aa)). The helical transmembrane segment at 91-102 (AIPVQVLLTGVC) threads the bilayer. Residues 103 to 268 (LQISNGSYLG…KVGNTQFSMS (166 aa)) lie on the Peroxisomal side of the membrane. A helical transmembrane segment spans residues 269–285 (RGKVAVSLVGLIICYAL). The Cytoplasmic segment spans residues 286–333 (KRKRAALIRIIRRQMESTRKAIVDFWKLAFSYQVNPLAAIQSIPSTTT).

Interacts with PEX6 and PEX19-1, but not with PEX1. Interacts (via N-terminus) with PEX13, and (via N-terminus and C-terminus) with PEX16. In terms of tissue distribution, expressed in roots, leaves, stems, flowers, buds and fruits.

It localises to the peroxisome membrane. In terms of biological role, involved in peroxisome biogenesis and matrix protein import. Required for pollen maturation and in vivo germination via its role in peroxisomal function, which partially involves jasmonic acid biosynthesis. Transported to peroxisomes via the interaction with PEX19-1. Required for peroxisomal protein import by acting as an anchoring protein for the AAA ATPase complex, which consists of PEX1 and PEX6. The polypeptide is Protein APEM9 (Arabidopsis thaliana (Mouse-ear cress)).